A 487-amino-acid polypeptide reads, in one-letter code: Beta-barrel assembly-enhancing protease (487 aa).

A signal peptide spans 1 to 27; sequence MFRQLKKNLVATLIAAMTIGQVAPAFA. H136 serves as a coordination point for Zn(2+). Residue E137 is part of the active site. H140 and E201 together coordinate Zn(2+). Residue D205 is the Proton donor of the active site. 4 TPR repeats span residues 309–342, 344–376, 377–409, and 427–460; these read RAAQ…EPGN, WYLD…RTNP, VLQL…NKDD, and DQEL…VKLG.

It belongs to the peptidase M48 family. BepA subfamily. The cofactor is Zn(2+).

Its subcellular location is the periplasm. Its function is as follows. Functions both as a chaperone and a metalloprotease. Maintains the integrity of the outer membrane by promoting either the assembly or the elimination of outer membrane proteins, depending on their folding state. The chain is Beta-barrel assembly-enhancing protease from Escherichia coli O157:H7.